The sequence spans 390 residues: Cytochrome b (390 aa).

4 consecutive transmembrane segments (helical) span residues methionine 32–methionine 52, tryptophan 76–glycine 98, leucine 113–cysteine 133, and phenylalanine 179–methionine 199. Heme b is bound by residues histidine 82 and histidine 96. Residues histidine 183 and histidine 197 each coordinate heme b. An a ubiquinone-binding site is contributed by histidine 202. The next 4 helical transmembrane spans lie at phenylalanine 225–phenylalanine 245, leucine 289–aspartate 309, leucine 321–alanine 341, and tyrosine 348–proline 368.

The protein belongs to the cytochrome b family. As to quaternary structure, fungal cytochrome b-c1 complex contains 10 subunits; 3 respiratory subunits, 2 core proteins and 5 low-molecular weight proteins. Cytochrome b-c1 complex is a homodimer. Requires heme b as cofactor.

It is found in the mitochondrion inner membrane. Functionally, component of the ubiquinol-cytochrome c reductase complex (complex III or cytochrome b-c1 complex) that is part of the mitochondrial respiratory chain. The b-c1 complex mediates electron transfer from ubiquinol to cytochrome c. Contributes to the generation of a proton gradient across the mitochondrial membrane that is then used for ATP synthesis. The sequence is that of Cytochrome b (COB) from Naumovozyma castellii (Yeast).